The sequence spans 362 residues: Class I histocompatibility antigen, Gogo-B*0102 alpha chain (362 aa).

The first 24 residues, 1–24 (MRVTAPRTLLLLLSAALALTETWA), serve as a signal peptide directing secretion. Residues 25 to 114 (GSHSMRYFDT…ALRYYNQSEA (90 aa)) are alpha-1. At 25–308 (GSHSMRYFDT…EPSSQSTIPI (284 aa)) the chain is on the extracellular side. The N-linked (GlcNAc...) asparagine glycan is linked to Asn-110. The alpha-2 stretch occupies residues 115–206 (GSHTFQRMFG…ENGRETLQRA (92 aa)). 2 disulfide bridges follow: Cys-125–Cys-188 and Cys-227–Cys-283. The segment at 207-298 (DTPKTHVTHH…GLPKPLTLRW (92 aa)) is alpha-3. The region spanning 209-295 (PKTHVTHHPI…QHEGLPKPLT (87 aa)) is the Ig-like C1-type domain. The connecting peptide stretch occupies residues 299–308 (EPSSQSTIPI). Residues 309–332 (VGIVAGLAVLAVVVIGAVVTAVIC) traverse the membrane as a helical segment. Residues 333 to 362 (RRKSSGGKGGSYSQAASSDSAQGSDVSLTA) lie on the Cytoplasmic side of the membrane. Residues 335–362 (KSSGGKGGSYSQAASSDSAQGSDVSLTA) form a disordered region. Residues 343–362 (SYSQAASSDSAQGSDVSLTA) show a composition bias toward low complexity.

It belongs to the MHC class I family. As to quaternary structure, heterodimer of an alpha chain and a beta chain (beta-2-microglobulin).

It is found in the membrane. Functionally, involved in the presentation of foreign antigens to the immune system. This is Class I histocompatibility antigen, Gogo-B*0102 alpha chain from Gorilla gorilla gorilla (Western lowland gorilla).